Here is a 314-residue protein sequence, read N- to C-terminus: MGKIYSFVLVAIALMMGREGWALESESCLREQVRLRAQVHQLETRVKQQQTMIAQLLHEKEVQFLDKGSENSFIDLGGKRQYADCSEIYNDGFKQSGFYKIKPLQSLAEFSVYCDMSDGGGWTVIQRRSDGSENFNRGWNDYENGFGNFVQNNGEYWLGNKNINLLTIQGDYTLKIDLTDFEKNSSFAQYQSFKVGDKKSFYELNIGEYSGTAGDSLSGTFHPEVQWWASHQRMKFSTWDRDNDNYQGNCAEEEQSGWWFNRCHSANLNGVYYRGSYRAETDNGVVWYTWHGWWYSLKSVVMKIRPSDFIPNII.

The N-terminal stretch at 1-22 (MGKIYSFVLVAIALMMGREGWA) is a signal peptide. Residues 28–62 (CLREQVRLRAQVHQLETRVKQQQTMIAQLLHEKEV) are a coiled coil. Positions 76–308 (LGGKRQYADC…SVVMKIRPSD (233 aa)) constitute a Fibrinogen C-terminal domain. Disulfide bonds link C85–C114 and C250–C263.

Homodimer. Interacts (via the Fibrinogen C-terminal domain) with LAG3 (via Ig-like domains 1 and 2). In terms of tissue distribution, mainly expressed in liver. Also expressed in brown adipose tissue.

It localises to the secreted. Its function is as follows. Immune suppressive molecule that inhibits antigen-specific T-cell activation by acting as a major ligand of LAG3. Responsible for LAG3 T-cell inhibitory function. Binds LAG3 independently from MHC class II (MHC-II). Secreted by, and promotes growth of, hepatocytes. This is Fibrinogen-like protein 1 (Fgl1) from Mus musculus (Mouse).